A 139-amino-acid chain; its full sequence is Stress-related protein 1 (139 aa).

A compositionally biased stretch (polar residues) spans 1–12 (MTSESSTPTGST). The disordered stretch occupies residues 1 to 86 (MTSESSTPTG…AERPGSATTP (86 aa)). Composition is skewed to low complexity over residues 14-53 (ALPA…SLVV) and 60-74 (SPVV…TRPR). The residue at position 60 (Ser60) is a Phosphoserine.

Embryo.

Functionally, involved in drought, heat, cold, and/or salt tolerance. In Zea mays (Maize), this protein is Stress-related protein 1 (SRP1).